The sequence spans 556 residues: MDIRRIVLYMALALIGLSLWNAWQIDYPAAQPVEDKTASQLTSDGHLLPQIIPSNAEQPVTLKAEEKASSGKQLIQVKTDVLDVGIDLKNGDIVKGLLLDYPLSVEDKNKPFPLLQNQASQRYVANSSLFVLDGQTPQSLDFDFTSEKEYYELKPDQNQLIVTLNGKSEDGLDVKKEFVFTKGSYLIEVNYKIANTGNSLWKGYFNTQLLRSSPKEDKSSIFHIGSYTGASFSNPGKNRYQKVSFSDMSKSNLDVDAKGGWIAMQQHYFLSAWVPNADSENKFYTLATDKDYTIGAVSQPITVKPKEDKIVGSKLYIGPEITSVLKGISPSLDLTVDYGILWFLSSLLFSLMKAIYTVVGNWGWSIVLVTVLIKLAFYRLSATSYKSMASMRKLQPKLQALRERYGDDKAKISQATMELYKQEKVNPLGGCLPILIQIPVFIALYWVLLESVELRQAPFIFWINDLASADPYHVLPLIMGATMLIQQKLNPAPADPMQAKVMMFLPILFTGLFWNFPSGLVLYWIVNNTLSILQQWYITRKYSDEKPAKKVVATAK.

5 consecutive transmembrane segments (helical) span residues 6-26, 332-352, 358-378, 428-448, and 501-521; these read IVLY…WQID, LDLT…FSLM, VVGN…LAFY, LGGC…YWVL, and VMMF…SGLV.

It belongs to the OXA1/ALB3/YidC family. Type 1 subfamily. Interacts with the Sec translocase complex via SecD. Specifically interacts with transmembrane segments of nascent integral membrane proteins during membrane integration.

The protein resides in the cell inner membrane. Its function is as follows. Required for the insertion and/or proper folding and/or complex formation of integral membrane proteins into the membrane. Involved in integration of membrane proteins that insert both dependently and independently of the Sec translocase complex, as well as at least some lipoproteins. Aids folding of multispanning membrane proteins. This chain is Membrane protein insertase YidC, found in Legionella pneumophila (strain Corby).